A 129-amino-acid chain; its full sequence is Iron-sulfur cluster assembly 1 homolog, mitochondrial (129 aa).

The transit peptide at 1 to 12 directs the protein to the mitochondrion; the sequence is MSASLVRATVRA. Cys57, Cys121, and Cys123 together coordinate Fe cation.

It belongs to the HesB/IscA family. Interacts with CRY2, but not with CRY1 (in vitro).

The protein resides in the mitochondrion. Its function is as follows. Involved in the maturation of mitochondrial 4Fe-4S proteins functioning late in the iron-sulfur cluster assembly pathway. Probably involved in the binding of an intermediate of Fe/S cluster assembly. The polypeptide is Iron-sulfur cluster assembly 1 homolog, mitochondrial (Isca1) (Rattus norvegicus (Rat)).